The primary structure comprises 130 residues: L-ectoine synthase (130 aa).

The protein belongs to the ectoine synthase family.

It carries out the reaction (2S)-4-acetamido-2-aminobutanoate = L-ectoine + H2O. Its pathway is amine and polyamine biosynthesis; ectoine biosynthesis; L-ectoine from L-aspartate 4-semialdehyde: step 3/3. Catalyzes the circularization of gamma-N-acetyl-alpha,gamma-diaminobutyric acid (ADABA) to ectoine (1,4,5,6-tetrahydro-2-methyl-4-pyrimidine carboxylic acid), which is an excellent osmoprotectant. This Mycobacteroides abscessus (strain ATCC 19977 / DSM 44196 / CCUG 20993 / CIP 104536 / JCM 13569 / NCTC 13031 / TMC 1543 / L948) (Mycobacterium abscessus) protein is L-ectoine synthase.